Here is a 285-residue protein sequence, read N- to C-terminus: MLRIAVPNKGSLSGPAAEMLHEAGYQQRRESKELRIVDPENEVEFFYLRPRDIAIYVSSGRLDIGLTGRDLLIDSGANAEEILPLGFARSTFRFAGKPGTAKGIEDLAGLTVATSYEGIVAKHLADSGIDASVVHLDGAVETAIELGVAEVIADVVETGTSLRNAGLEVFGEPIMKSEAVVIRRVGAGTDEAAESKVQQFLRRLQGVLVARTYVMMDYDCRAEHLEKAVALTPGLESPTISPLHNEGWVAVRAMVPAKEAQRIMDDLYALGARAILTTAIHACRL.

Belongs to the ATP phosphoribosyltransferase family. Long subfamily. It depends on Mg(2+) as a cofactor.

The protein localises to the cytoplasm. It catalyses the reaction 1-(5-phospho-beta-D-ribosyl)-ATP + diphosphate = 5-phospho-alpha-D-ribose 1-diphosphate + ATP. Its pathway is amino-acid biosynthesis; L-histidine biosynthesis; L-histidine from 5-phospho-alpha-D-ribose 1-diphosphate: step 1/9. Its activity is regulated as follows. Feedback inhibited by histidine. Functionally, catalyzes the condensation of ATP and 5-phosphoribose 1-diphosphate to form N'-(5'-phosphoribosyl)-ATP (PR-ATP). Has a crucial role in the pathway because the rate of histidine biosynthesis seems to be controlled primarily by regulation of HisG enzymatic activity. The sequence is that of ATP phosphoribosyltransferase from Streptomyces avermitilis (strain ATCC 31267 / DSM 46492 / JCM 5070 / NBRC 14893 / NCIMB 12804 / NRRL 8165 / MA-4680).